The chain runs to 452 residues: Glycylpeptide N-tetradecanoyltransferase (452 aa).

Tetradecanoyl-CoA-binding positions include 38–41 (YKFW), 171–173 (LCI), and 179–183 (SKRLA). Leucine 452 functions as the Proton acceptor; via carboxylate in the catalytic mechanism.

The protein belongs to the NMT family. In terms of assembly, monomer.

It is found in the cytoplasm. It catalyses the reaction N-terminal glycyl-[protein] + tetradecanoyl-CoA = N-tetradecanoylglycyl-[protein] + CoA + H(+). Functionally, adds a myristoyl group to the N-terminal glycine residue of certain cellular proteins. In Eremothecium gossypii (strain ATCC 10895 / CBS 109.51 / FGSC 9923 / NRRL Y-1056) (Yeast), this protein is Glycylpeptide N-tetradecanoyltransferase (NMT1).